An 85-amino-acid polypeptide reads, in one-letter code: RNA-binding protein Hfq (85 aa).

A Sm domain is found at 9–68; sequence DPFLNALRRERIPVSIYLVNGIKLQGQIESFDQFVVLLKNTVSQMVYKHAISTVVPARIP.

The protein belongs to the Hfq family. Homohexamer.

RNA chaperone that binds small regulatory RNA (sRNAs) and mRNAs to facilitate mRNA translational regulation in response to envelope stress, environmental stress and changes in metabolite concentrations. Also binds with high specificity to tRNAs. This chain is RNA-binding protein Hfq, found in Idiomarina loihiensis (strain ATCC BAA-735 / DSM 15497 / L2-TR).